Here is a 44-residue protein sequence, read N- to C-terminus: Defensin-like protein 1 (44 aa).

Gln1 carries the pyrrolidone carboxylic acid modification. Cysteines 15 and 36 form a disulfide.

This sequence belongs to the DEFL family. In terms of assembly, forms oligomers in its native state.

The protein resides in the secreted. Functionally, possesses antifungal activity sensitive to inorganic cations. The chain is Defensin-like protein 1 (AFP1) from Brassica napus (Rape).